We begin with the raw amino-acid sequence, 174 residues long: Endoribonuclease YbeY (174 aa).

Residues H129, H133, and H139 each coordinate Zn(2+).

Belongs to the endoribonuclease YbeY family. Requires Zn(2+) as cofactor.

It is found in the cytoplasm. Single strand-specific metallo-endoribonuclease involved in late-stage 70S ribosome quality control and in maturation of the 3' terminus of the 16S rRNA. This is Endoribonuclease YbeY from Lactobacillus delbrueckii subsp. bulgaricus (strain ATCC 11842 / DSM 20081 / BCRC 10696 / JCM 1002 / NBRC 13953 / NCIMB 11778 / NCTC 12712 / WDCM 00102 / Lb 14).